The chain runs to 415 residues: Coenzyme F420 hydrogenase subunit alpha (415 aa).

Ni(2+)-binding residues include Cys68, Cys71, Cys391, and Cys394.

It belongs to the [NiFe]/[NiFeSe] hydrogenase large subunit family. Heterocomplex of the form (alpha(1)beta(1)gamma(1))(8). It depends on Ni(2+) as a cofactor. Iron-sulfur cluster is required as a cofactor. Requires FAD as cofactor.

It catalyses the reaction oxidized coenzyme F420-(gamma-L-Glu)(n) + H2 + H(+) = reduced coenzyme F420-(gamma-L-Glu)(n). Reduces the physiological low-potential two-electron acceptor coenzyme F420, and the artificial one-electron acceptor methylviologen. The chain is Coenzyme F420 hydrogenase subunit alpha (frhA) from Methanocaldococcus jannaschii (strain ATCC 43067 / DSM 2661 / JAL-1 / JCM 10045 / NBRC 100440) (Methanococcus jannaschii).